The primary structure comprises 464 residues: Arginine biosynthesis bifunctional protein ArgJ, mitochondrial (464 aa).

Residues threonine 191, lysine 220, threonine 231, glutamate 318, asparagine 459, and threonine 464 each coordinate substrate. Threonine 231 acts as the Nucleophile in catalysis.

Belongs to the ArgJ family. In terms of assembly, heterodimer of an alpha and a beta chain. Post-translationally, the alpha and beta chains are autoproteolytically processed from a single precursor protein within the mitochondrion.

It is found in the mitochondrion matrix. It catalyses the reaction N(2)-acetyl-L-ornithine + L-glutamate = N-acetyl-L-glutamate + L-ornithine. The catalysed reaction is L-glutamate + acetyl-CoA = N-acetyl-L-glutamate + CoA + H(+). The protein operates within amino-acid biosynthesis; L-arginine biosynthesis; L-ornithine and N-acetyl-L-glutamate from L-glutamate and N(2)-acetyl-L-ornithine (cyclic): step 1/1. Its pathway is amino-acid biosynthesis; L-arginine biosynthesis; N(2)-acetyl-L-ornithine from L-glutamate: step 1/4. Functionally, catalyzes two activities which are involved in the cyclic version of arginine biosynthesis: the synthesis of acetylglutamate from glutamate and acetyl-CoA, and of ornithine by transacetylation between acetylornithine and glutamate. The sequence is that of Arginine biosynthesis bifunctional protein ArgJ, mitochondrial from Pyricularia oryzae (strain 70-15 / ATCC MYA-4617 / FGSC 8958) (Rice blast fungus).